Reading from the N-terminus, the 320-residue chain is Putative fatty acid elongase 3 (320 aa).

N-linked (GlcNAc...) asparagine glycosylation is present at asparagine 14. 6 helical membrane-spanning segments follow: residues 33–53, 67–87, 120–140, 145–165, 203–223, and 242–262; these read WMQNHWYQSITASVVYVAVIF, LDTPLFVWNSFLAIFSILGFL, FWTEQFAMSKLFELIDTIFIV, PLIFLHWYHHVTVMIYTWHAY, MAMVVTTLQLAQMVMGVIIGV, and LGLCFGVYFTYFLLFANFFYH.

The protein belongs to the ELO family.

Its subcellular location is the membrane. It catalyses the reaction a very-long-chain acyl-CoA + malonyl-CoA + H(+) = a very-long-chain 3-oxoacyl-CoA + CO2 + CoA. The protein operates within lipid metabolism; fatty acid biosynthesis. Could be implicated in synthesis of very long chain fatty acids. May be required for normally rapid growth. This chain is Putative fatty acid elongase 3 (elo-3), found in Caenorhabditis elegans.